We begin with the raw amino-acid sequence, 714 residues long: MSRFGGRLREYPQLSIDRFDYDNLRARAYFLSHCHKDHMKGLRAPALRRRLQSSLKVKLYCSPVTKELLLTNSKYAFWENHIVALEVETPTQISLVDETTGEKEDIEVTLLPAGHCPGSVMFLFQGENGTVLYTGDFRLAKGEAARMELLHSGTSVKDIQSVYLDTTFCDPRFYHIPSREECLSGILELVRSWTTLSRYHVVWLNCKAAYGYEYLFINLSEELGIKVHVNKLDMFKNMPEILYHITTDRYTQIHACRHPKDDDYVRGNRLPCGITCQNGTPLHVISIKPSTMWFGERIKKTNVIVRTGESTYRACFSFHSSYSEIMDFLSYIRPVNVYPNVLPVGGSEDKVMEILQPLCRSYRRNTEPRYKPLGTLKRACKRNLSDTDEDELFDTELSARPKIAKYQGEESKPSQTAQPENAERNINESTESYRANTAYTSLKVDFVDCEESNDDDDDDDDDDKEDDSEKNTAQVLSHEPDANSIASCNGIPSNQQESNADIPSWDMFFKCNKVDESSENEDNFPSSADAGGSQSLFSDSDGVSDSTHISSQNSSQSTHISEQGSQGWDSQMDTVLITSQERNAADFSCFSRGGSRTALLSHDTPRDSQADDSRWKLLGQNPSCASDVICDLKSEDCEKDAEAGTAPTQDLLVEISDSSRTPDLELKRDSQSSSDFEIPLTPDAEIPQRDKLHYLYKKLAAGESIMRKNSPEKR.

Disordered regions lie at residues 391–500, 516–577, 598–617, and 638–683; these read ELFD…ESNA, ESSE…TVLI, ALLS…RWKL, and EKDA…LTPD. A compositionally biased stretch (polar residues) spans 427 to 440; that stretch reads NESTESYRANTAYT. Residues 447 to 468 are compositionally biased toward acidic residues; the sequence is VDCEESNDDDDDDDDDDKEDDS. 2 stretches are compositionally biased toward polar residues: residues 484-500 and 532-543; these read SIAS…ESNA and GSQSLFSDSDGV. Low complexity predominate over residues 544 to 561; that stretch reads SDSTHISSQNSSQSTHIS. Polar residues predominate over residues 562-577; the sequence is EQGSQGWDSQMDTVLI. Basic and acidic residues-rich tracts occupy residues 603–615 and 660–670; these read DTPR…DSRW and RTPDLELKRDS. Serine 670 is subject to Phosphoserine; by ATM.

It belongs to the DNA repair metallo-beta-lactamase (DRMBL) family. In terms of assembly, interacts with PRKDC. Post-translationally, phosphorylation on undefined residues by PRKDC may stimulate endonucleolytic activity on 5' and 3' hairpins and overhangs. PRKDC must remain present, even after phosphorylation, for efficient hairpin opening.

It localises to the nucleus. Its function is as follows. Required for V(D)J recombination, the process by which exons encoding the antigen-binding domains of immunoglobulins and T-cell receptor proteins are assembled from individual V, (D), and J gene segments. V(D)J recombination is initiated by the lymphoid specific RAG endonuclease complex, which generates site specific DNA double strand breaks (DSBs). These DSBs present two types of DNA end structures: hairpin sealed coding ends and phosphorylated blunt signal ends. These ends are independently repaired by the non homologous end joining (NHEJ) pathway to form coding and signal joints respectively. This protein exhibits single-strand specific 5'-3' exonuclease activity in isolation, and acquires endonucleolytic activity on 5' and 3' hairpins and overhangs when in a complex with PRKDC. The latter activity is required specifically for the resolution of closed hairpins prior to the formation of the coding joint. May also be required for the repair of complex DSBs induced by ionizing radiation, which require substantial end-processing prior to religation by NHEJ. This Gallus gallus (Chicken) protein is Protein artemis (DCLRE1C).